A 476-amino-acid chain; its full sequence is Aspartyl/glutamyl-tRNA(Asn/Gln) amidotransferase subunit B 1 (476 aa).

The protein belongs to the GatB/GatE family. GatB subfamily. In terms of assembly, heterotrimer of A, B and C subunits.

The catalysed reaction is L-glutamyl-tRNA(Gln) + L-glutamine + ATP + H2O = L-glutaminyl-tRNA(Gln) + L-glutamate + ADP + phosphate + H(+). It catalyses the reaction L-aspartyl-tRNA(Asn) + L-glutamine + ATP + H2O = L-asparaginyl-tRNA(Asn) + L-glutamate + ADP + phosphate + 2 H(+). Functionally, allows the formation of correctly charged Asn-tRNA(Asn) or Gln-tRNA(Gln) through the transamidation of misacylated Asp-tRNA(Asn) or Glu-tRNA(Gln) in organisms which lack either or both of asparaginyl-tRNA or glutaminyl-tRNA synthetases. The reaction takes place in the presence of glutamine and ATP through an activated phospho-Asp-tRNA(Asn) or phospho-Glu-tRNA(Gln). The polypeptide is Aspartyl/glutamyl-tRNA(Asn/Gln) amidotransferase subunit B 1 (gatB1) (Clostridium acetobutylicum (strain ATCC 824 / DSM 792 / JCM 1419 / IAM 19013 / LMG 5710 / NBRC 13948 / NRRL B-527 / VKM B-1787 / 2291 / W)).